We begin with the raw amino-acid sequence, 87 residues long: MAYPLLCHYIKAPHSSFPLIPHTSHYILQLVYLHLFHPLPCTQHSHQTMKIEGRRGQMGRLNRAFREKRARFYIFRRCVIMLLRWSD.

Residues 19–35 (LIPHTSHYILQLVYLHL) form a helical membrane-spanning segment. The tract at residues 56–87 (GQMGRLNRAFREKRARFYIFRRCVIMLLRWSD) is required for DVL/RTFL small polypeptide activity.

This sequence belongs to the DVL/RTFL small polypeptides family.

It is found in the cell membrane. Its function is as follows. Small polypeptide acting as a regulatory molecule which coordinates cellular responses required for differentiation, growth and development, probably by restricting polar cell proliferation in lateral organs. This Oryza sativa subsp. japonica (Rice) protein is Small polypeptide ROTUNDIFOLIA LIKE 2.